The chain runs to 280 residues: Shikimate kinase (280 aa).

86-96 (PPGVGLKGSAA) serves as a coordination point for ATP.

Belongs to the GHMP kinase family. Archaeal shikimate kinase subfamily.

Its subcellular location is the cytoplasm. It carries out the reaction shikimate + ATP = 3-phosphoshikimate + ADP + H(+). It functions in the pathway metabolic intermediate biosynthesis; chorismate biosynthesis; chorismate from D-erythrose 4-phosphate and phosphoenolpyruvate: step 5/7. In Aeropyrum pernix (strain ATCC 700893 / DSM 11879 / JCM 9820 / NBRC 100138 / K1), this protein is Shikimate kinase (aroK).